The chain runs to 278 residues: Undecaprenyl-diphosphatase (278 aa).

6 helical membrane-spanning segments follow: residues phenylalanine 44–tyrosine 64, tryptophan 84–leucine 104, phenylalanine 112–isoleucine 132, serine 187–leucine 207, valine 224–phenylalanine 244, and phenylalanine 254–isoleucine 274.

This sequence belongs to the UppP family.

The protein resides in the cell membrane. It carries out the reaction di-trans,octa-cis-undecaprenyl diphosphate + H2O = di-trans,octa-cis-undecaprenyl phosphate + phosphate + H(+). Catalyzes the dephosphorylation of undecaprenyl diphosphate (UPP). Confers resistance to bacitracin. The polypeptide is Undecaprenyl-diphosphatase (Streptococcus suis (strain 98HAH33)).